The primary structure comprises 233 residues: Hydroxyacylglutathione hydrolase (233 aa).

Residues His52, His54, Asp56, His57, His108, Asp125, and His163 each contribute to the Zn(2+) site.

Belongs to the metallo-beta-lactamase superfamily. Glyoxalase II family. In terms of assembly, monomer. The cofactor is Zn(2+).

It catalyses the reaction an S-(2-hydroxyacyl)glutathione + H2O = a 2-hydroxy carboxylate + glutathione + H(+). It functions in the pathway secondary metabolite metabolism; methylglyoxal degradation; (R)-lactate from methylglyoxal: step 2/2. Functionally, thiolesterase that catalyzes the hydrolysis of S-D-lactoyl-glutathione to form glutathione and D-lactic acid. This chain is Hydroxyacylglutathione hydrolase, found in Histophilus somni (strain 2336) (Haemophilus somnus).